Consider the following 328-residue polypeptide: RNA binding protein fox-1 homolog 3 (328 aa).

Residues 1–30 (MAQPYPPAQYPPPPQNGIPAEYAPPPPHPT) are compositionally biased toward pro residues. The tract at residues 1–106 (MAQPYPPAQY…QPKRLHVSNI (106 aa)) is disordered. Over residues 49 to 87 (TPAQTHPEQPSSDTSTQPITGAQTVPQTDEAAQTDSQPL) the composition is skewed to polar residues. One can recognise an RRM domain in the interval 99–172 (KRLHVSNIPF…NPVVGAVYGP (74 aa)). At Arg192 the chain carries Asymmetric dimethylarginine; alternate. Omega-N-methylarginine; alternate is present on Arg192. At Arg288 the chain carries Asymmetric dimethylarginine.

Its subcellular location is the nucleus. It is found in the cytoplasm. In terms of biological role, pre-mRNA alternative splicing regulator. Regulates alternative splicing of RBFOX2 to enhance the production of mRNA species that are targeted for nonsense-mediated decay (NMD). The protein is RNA binding protein fox-1 homolog 3 (RBFOX3) of Bos taurus (Bovine).